The primary structure comprises 647 residues: Pollen receptor-like kinase 2 (647 aa).

Positions 1 to 21 (MESKCLMFVSIVSVFFMVVNG) are cleaved as a signal peptide. 5 LRR repeats span residues 87 to 109 (LNSL…EFKK), 110 to 134 (LVAL…AFDG), 136 to 159 (GWLK…LVKS), 161 to 183 (KLIE…RHHP), and 185 to 203 (MLNL…SFST). A helical membrane pass occupies residues 248-268 (IVAAAVAALAASLIIIGVVIF). The Protein kinase domain maps to 338 to 613 (KASAEILGSG…EAVEKMEDLM (276 aa)). Position 340 is a phosphoserine (serine 340). ATP is bound by residues 344–352 (LGSGCFGAS) and lysine 366. Position 418 is a phosphoserine (serine 418). Residue threonine 438 is modified to Phosphothreonine. Tyrosine 508 carries the phosphotyrosine modification. A disordered region spans residues 620–647 (DDDFYSTYASEADGRSSRGLSSEGINLS). The segment covering 637–647 (RGLSSEGINLS) has biased composition (polar residues).

The protein belongs to the protein kinase superfamily. Ser/Thr protein kinase family. In terms of assembly, part of a complex containing ROPGEF1 and ARAC11/ROP1. The interaction between PRK2, ROPGEF1 and ARAC11/ROP1 is phosphorylation-independent. Interacts with ROPGEF12 (via C-terminus). Interacts with ROPGEF1 (via PRONE domain). Expressed in pollen and/or in flowers, but not in leaves. Expressed in pollen tube.

Its subcellular location is the cell membrane. The enzyme catalyses L-seryl-[protein] + ATP = O-phospho-L-seryl-[protein] + ADP + H(+). It carries out the reaction L-threonyl-[protein] + ATP = O-phospho-L-threonyl-[protein] + ADP + H(+). Its activity is regulated as follows. The phosphorylation activity is calcium-independent. Functionally, receptor-like kinase involved in the control of pollen germination and pollen tube polar growth. Phosphorylates ROPGEF1 in its C-terminal region, releasing its auto-inhibition, and thereby activating the ROP1 signaling pathway. May act as a scaffolding protein, recruiting ROPGEF12 to the plasma membrane by binding to its C-terminal domain. Phosphorylates ROPGEF12, releasing its auto-inhibition. In Arabidopsis thaliana (Mouse-ear cress), this protein is Pollen receptor-like kinase 2.